We begin with the raw amino-acid sequence, 353 residues long: Histidinol-phosphate aminotransferase 1 (353 aa).

K211 carries the N6-(pyridoxal phosphate)lysine modification.

It belongs to the class-II pyridoxal-phosphate-dependent aminotransferase family. Histidinol-phosphate aminotransferase subfamily. Homodimer. Pyridoxal 5'-phosphate serves as cofactor.

It carries out the reaction L-histidinol phosphate + 2-oxoglutarate = 3-(imidazol-4-yl)-2-oxopropyl phosphate + L-glutamate. It functions in the pathway amino-acid biosynthesis; L-histidine biosynthesis; L-histidine from 5-phospho-alpha-D-ribose 1-diphosphate: step 7/9. The chain is Histidinol-phosphate aminotransferase 1 (hisC1) from Nostoc sp. (strain PCC 7120 / SAG 25.82 / UTEX 2576).